The following is a 444-amino-acid chain: Tubulin beta-2 chain (444 aa).

The GTP site is built by Gln11, Glu69, Ser138, Gly142, Thr143, Gly144, Asn204, and Asn226. Glu69 serves as a coordination point for Mg(2+). Residues 422 to 444 form a disordered region; it reads YQQYQDATAEEDDYDDGEGSTGD. Acidic residues predominate over residues 429 to 444; sequence TAEEDDYDDGEGSTGD.

It belongs to the tubulin family. In terms of assembly, dimer of alpha and beta chains. A typical microtubule is a hollow water-filled tube with an outer diameter of 25 nm and an inner diameter of 15 nM. Alpha-beta heterodimers associate head-to-tail to form protofilaments running lengthwise along the microtubule wall with the beta-tubulin subunit facing the microtubule plus end conferring a structural polarity. Microtubules usually have 13 protofilaments but different protofilament numbers can be found in some organisms and specialized cells. It depends on Mg(2+) as a cofactor. In terms of tissue distribution, found in areas of rapidly dividing tissues.

It localises to the cytoplasm. Its subcellular location is the cytoskeleton. Functionally, tubulin is the major constituent of microtubules, a cylinder consisting of laterally associated linear protofilaments composed of alpha- and beta-tubulin heterodimers. Microtubules grow by the addition of GTP-tubulin dimers to the microtubule end, where a stabilizing cap forms. Below the cap, tubulin dimers are in GDP-bound state, owing to GTPase activity of alpha-tubulin. The protein is Tubulin beta-2 chain (TUBB2) of Daucus carota (Wild carrot).